A 246-amino-acid chain; its full sequence is Tyrosine recombinase XerD-like (246 aa).

The region spanning 1–72 (MINDINNFIE…AVNQFLFFLY (72 aa)) is the Core-binding (CB) domain. In terms of domain architecture, Tyr recombinase spans 84-246 (QETEKITLTQ…TPITLERYYR (163 aa)). Residues Lys149 and Arg212 contribute to the active site. Tyr244 acts as the O-(3'-phospho-DNA)-tyrosine intermediate in catalysis.

This sequence belongs to the 'phage' integrase family. XerD-like subfamily.

It is found in the cytoplasm. Its function is as follows. Putative tyrosine recombinase. Not involved in the cutting and rejoining of the recombining DNA molecules on dif(SL) site. This is Tyrosine recombinase XerD-like from Streptococcus agalactiae serotype III (strain NEM316).